A 1133-amino-acid chain; its full sequence is Protein cordon-bleu (1133 aa).

Positions 1–11 (MKARAPPPPGK) are enriched in pro residues. The tract at residues 1-25 (MKARAPPPPGKPAAQNVHSEQKLPH) is disordered. Residues Ser-31, Ser-34, Ser-196, Ser-219, Ser-256, and Ser-278 each carry the phosphoserine modification. Disordered stretches follow at residues 246–393 (AEHL…SVNG) and 442–568 (QGGI…GQAS). A compositionally biased stretch (polar residues) spans 272–301 (CVTTPNSPSLHSRSLTLGPSLSLGNISGMS). The KKRRAP 1 motif lies at 307-312 (KKRRAP). Phosphoserine occurs at positions 330 and 333. A KKRRAP 2 motif is present at residues 340-345 (KKRRAP). Residues 345-358 (PAPPPPQPPPPSPV) show a composition bias toward pro residues. Phosphoserine is present on Ser-356. A compositionally biased stretch (basic and acidic residues) spans 361–371 (NRKEDKEENRK). 2 stretches are compositionally biased toward polar residues: residues 382-393 (TDTSSLTSSVNG) and 442-464 (QGGIASQRSHLPPYQTEQSQPFI). Ser-447 carries the post-translational modification Phosphoserine. Basic and acidic residues predominate over residues 512-524 (STDDPKAKDKDKM). Ser-614 carries the phosphoserine modification. The interval 664–720 (APSTTITATSEKPQRDETKAGFTLTTPEQQPASQEYGAPPEEDRSRPHSAVSCPVKV) is disordered. Polar residues-rich tracts occupy residues 665–674 (PSTTITATSE) and 686–696 (TLTTPEQQPAS). Ser-924 is modified (phosphoserine). Disordered stretches follow at residues 942 to 961 (PSPLSADGQNSDDALPSSIF) and 990 to 1018 (HTSGGRDKLRKTAEQASEGRPKKPSYVEA). 2 WH2 domains span residues 981 to 1001 (LHSALMEAIHTSGGRDKLRKT) and 1021 to 1041 (ERSALLAAIRGHSGTLSLRKV). Basic and acidic residues predominate over residues 993–1010 (GGRDKLRKTAEQASEGRP). Residues 1063-1091 (DKPQQEDRGLPPPPALPPPSTPASQVPSA) form a disordered region. Residues 1072–1083 (LPPPPALPPPST) are compositionally biased toward pro residues. A Phosphoserine modification is found at Ser-1099. Positions 1109–1129 (ARQALMDAIRSGTGAARLRKV) constitute a WH2 3 domain.

Identified in a complex composed of ACTA1, COBL, GSN AND TMSB4X. Identified in a complex composed of COBL, PACSIN1 and WASL. Interacts with PACSIN1, PACSIN2 and PACSIN3. Interacts (via WH2 domains) with actin monomers. Interacts with both PACSIN1 and DBNL. As to expression, detected in brain (at protein level).

It localises to the cell membrane. It is found in the cytoplasm. The protein resides in the cytoskeleton. The protein localises to the cell projection. Its subcellular location is the ruffle. It localises to the cytosol. In terms of biological role, plays an important role in the reorganization of the actin cytoskeleton. Binds to and sequesters actin monomers (G actin). Nucleates actin polymerization by assembling three actin monomers in cross-filament orientation and thereby promotes growth of actin filaments at the barbed end. Can also mediate actin depolymerization at barbed ends and severing of actin filaments. Promotes formation of cell ruffles. Regulates dendrite branching in Purkinje cells. Regulates neuron morphogenesis and increases branching of axons and dendrites. This chain is Protein cordon-bleu (Cobl), found in Rattus norvegicus (Rat).